Here is a 257-residue protein sequence, read N- to C-terminus: Zinc transporter ZupT (257 aa).

The next 5 membrane-spanning stretches (helical) occupy residues 5–25, 32–52, 61–81, 109–129, and 137–157; these read LILTLLAGAATFIGAFLAVLG, VLAFSLGFAAGIMLLISLMEM, GMSPVLGYGMFIIGLLGYFGL, AILLTLGISLHNFPEGIATFV, and LGMGIALAVALHNIPEGLAVA. Positions 120 and 123 each coordinate Fe(2+). The Zn(2+) site is built by Glu123 and His148. The Fe(2+) site is built by Asn149, Glu152, and Glu181. Glu152 contributes to the Zn(2+) binding site. 3 helical membrane-spanning segments follow: residues 182-202, 203-223, and 236-256; these read ILGGVLAWLILGSLISPVVMA, AVMAAVAGIMVALSVDELMPL, and GVLCGMSVMGLSLVVLQTAGI.

It belongs to the ZIP transporter (TC 2.A.5) family. ZupT subfamily.

The protein localises to the cell inner membrane. The enzyme catalyses Zn(2+)(in) = Zn(2+)(out). Its function is as follows. Mediates zinc uptake. May also transport other divalent cations. The sequence is that of Zinc transporter ZupT from Escherichia fergusonii (strain ATCC 35469 / DSM 13698 / CCUG 18766 / IAM 14443 / JCM 21226 / LMG 7866 / NBRC 102419 / NCTC 12128 / CDC 0568-73).